A 136-amino-acid chain; its full sequence is MQASAAFPKAARLLKTDEFSSVFRLRPWRRTAHFVIYGKPTGRDARLGLVIGKKYAARAVTRNLVKRLAREAFRTRRAEFAGWDILLRLHARFDKKAMPSAASAPLAALCAGEIRELLDRAAREVARRNGAKPASE.

This sequence belongs to the RnpA family. In terms of assembly, consists of a catalytic RNA component (M1 or rnpB) and a protein subunit.

It catalyses the reaction Endonucleolytic cleavage of RNA, removing 5'-extranucleotides from tRNA precursor.. Its function is as follows. RNaseP catalyzes the removal of the 5'-leader sequence from pre-tRNA to produce the mature 5'-terminus. It can also cleave other RNA substrates such as 4.5S RNA. The protein component plays an auxiliary but essential role in vivo by binding to the 5'-leader sequence and broadening the substrate specificity of the ribozyme. This is Ribonuclease P protein component from Burkholderia pseudomallei (strain 1106a).